The primary structure comprises 536 residues: Inactive phospholipase D5 (536 aa).

A helical membrane pass occupies residues 69 to 89 (IVIFALVCCFAILVALIFSAV). An N-linked (GlcNAc...) asparagine glycan is attached at Asn-121. In terms of domain architecture, PLD phosphodiesterase 1 spans 215 to 242 (NKGRLQSSFWIVDKQHVYIGSAGLDWQS). Asn-302 carries N-linked (GlcNAc...) asparagine glycosylation. Positions 434–460 (FPRLNRNKYMVTDGAAYIGNFDWVGND) constitute a PLD phosphodiesterase 2 domain.

This sequence belongs to the phospholipase D family.

The protein localises to the membrane. The polypeptide is Inactive phospholipase D5 (PLD5) (Homo sapiens (Human)).